The following is a 312-amino-acid chain: ADP-L-glycero-D-manno-heptose-6-epimerase (312 aa).

NADP(+) is bound by residues 10-11 (FI), 31-32 (DN), lysine 38, lysine 53, 75-79 (EGACS), and asparagine 92. Tyrosine 140 functions as the Proton acceptor in the catalytic mechanism. An NADP(+)-binding site is contributed by lysine 144. Asparagine 169 is a binding site for substrate. Residues valine 170 and lysine 178 each coordinate NADP(+). Residue lysine 178 is the Proton acceptor of the active site. Substrate is bound by residues serine 180, histidine 187, 201-204 (FAGS), arginine 209, and tyrosine 274.

It belongs to the NAD(P)-dependent epimerase/dehydratase family. HldD subfamily. In terms of assembly, homopentamer. NADP(+) serves as cofactor.

It catalyses the reaction ADP-D-glycero-beta-D-manno-heptose = ADP-L-glycero-beta-D-manno-heptose. The protein operates within nucleotide-sugar biosynthesis; ADP-L-glycero-beta-D-manno-heptose biosynthesis; ADP-L-glycero-beta-D-manno-heptose from D-glycero-beta-D-manno-heptose 7-phosphate: step 4/4. It participates in bacterial outer membrane biogenesis; LPS core biosynthesis. Catalyzes the interconversion between ADP-D-glycero-beta-D-manno-heptose and ADP-L-glycero-beta-D-manno-heptose via an epimerization at carbon 6 of the heptose. This chain is ADP-L-glycero-D-manno-heptose-6-epimerase, found in Photorhabdus laumondii subsp. laumondii (strain DSM 15139 / CIP 105565 / TT01) (Photorhabdus luminescens subsp. laumondii).